The primary structure comprises 602 residues: Elongation factor 4 (602 aa).

The tr-type G domain occupies 7–188 (ENIRNFSIIA…SIIRLVPPPK (182 aa)). Residues 19-24 (DHGKST) and 135-138 (NKID) each bind GTP.

It belongs to the TRAFAC class translation factor GTPase superfamily. Classic translation factor GTPase family. LepA subfamily.

The protein localises to the cell inner membrane. It catalyses the reaction GTP + H2O = GDP + phosphate + H(+). Functionally, required for accurate and efficient protein synthesis under certain stress conditions. May act as a fidelity factor of the translation reaction, by catalyzing a one-codon backward translocation of tRNAs on improperly translocated ribosomes. Back-translocation proceeds from a post-translocation (POST) complex to a pre-translocation (PRE) complex, thus giving elongation factor G a second chance to translocate the tRNAs correctly. Binds to ribosomes in a GTP-dependent manner. In Chlamydia trachomatis serovar A (strain ATCC VR-571B / DSM 19440 / HAR-13), this protein is Elongation factor 4.